Reading from the N-terminus, the 192-residue chain is uncharacterized protein (192 aa).

The region spanning 29 to 160 is the Nudix hydrolase domain; the sequence is HRQAAVLIPI…PLDIYRRGDS (132 aa). Residues 67–89 carry the Nudix box motif; it reads GAVDDTDASVIAAALREAEEEVA. Glu-83 and Glu-87 together coordinate Mg(2+).

This sequence belongs to the Nudix hydrolase family. PCD1 subfamily. The cofactor is Mn(2+). Requires Mg(2+) as cofactor.

Functionally, probably mediates the hydrolysis of some nucleoside diphosphate derivatives. This is an uncharacterized protein from Escherichia coli (strain SMS-3-5 / SECEC).